A 509-amino-acid polypeptide reads, in one-letter code: ATP synthase subunit alpha (509 aa).

Residue 171–178 participates in ATP binding; sequence GDRKTGKT.

The protein belongs to the ATPase alpha/beta chains family. F-type ATPases have 2 components, CF(1) - the catalytic core - and CF(0) - the membrane proton channel. CF(1) has five subunits: alpha(3), beta(3), gamma(1), delta(1), epsilon(1). CF(0) has three main subunits: a(1), b(2) and c(9-12). The alpha and beta chains form an alternating ring which encloses part of the gamma chain. CF(1) is attached to CF(0) by a central stalk formed by the gamma and epsilon chains, while a peripheral stalk is formed by the delta and b chains.

It is found in the cell inner membrane. The catalysed reaction is ATP + H2O + 4 H(+)(in) = ADP + phosphate + 5 H(+)(out). Produces ATP from ADP in the presence of a proton gradient across the membrane. The alpha chain is a regulatory subunit. This Ehrlichia chaffeensis (strain ATCC CRL-10679 / Arkansas) protein is ATP synthase subunit alpha.